Consider the following 187-residue polypeptide: ATP-dependent protease subunit HslV (187 aa).

The active site involves Thr-13. Na(+) contacts are provided by Ala-172, Cys-175, and Thr-178.

Belongs to the peptidase T1B family. HslV subfamily. In terms of assembly, a double ring-shaped homohexamer of HslV is capped on each side by a ring-shaped HslU homohexamer. The assembly of the HslU/HslV complex is dependent on binding of ATP.

The protein localises to the cytoplasm. It carries out the reaction ATP-dependent cleavage of peptide bonds with broad specificity.. Its activity is regulated as follows. Allosterically activated by HslU binding. Functionally, protease subunit of a proteasome-like degradation complex believed to be a general protein degrading machinery. The protein is ATP-dependent protease subunit HslV of Caulobacter sp. (strain K31).